Reading from the N-terminus, the 526-residue chain is Peptide chain release factor 3 (526 aa).

Residues 8 to 277 (DKRRTFAIIS…GLTQWAPKPQ (270 aa)) form the tr-type G domain. GTP contacts are provided by residues 17–24 (SHPDAGKT), 85–89 (DTPGH), and 139–142 (NKLD).

The protein belongs to the TRAFAC class translation factor GTPase superfamily. Classic translation factor GTPase family. PrfC subfamily.

The protein resides in the cytoplasm. Functionally, increases the formation of ribosomal termination complexes and stimulates activities of RF-1 and RF-2. It binds guanine nucleotides and has strong preference for UGA stop codons. It may interact directly with the ribosome. The stimulation of RF-1 and RF-2 is significantly reduced by GTP and GDP, but not by GMP. The protein is Peptide chain release factor 3 of Actinobacillus succinogenes (strain ATCC 55618 / DSM 22257 / CCUG 43843 / 130Z).